A 207-amino-acid chain; its full sequence is Small ribosomal subunit protein uS4 (207 aa).

An S4 RNA-binding domain is found at 97-159; sequence SRLDNVCYRM…AKSQLRIQAA (63 aa).

The protein belongs to the universal ribosomal protein uS4 family. In terms of assembly, part of the 30S ribosomal subunit. Contacts protein S5. The interaction surface between S4 and S5 is involved in control of translational fidelity.

In terms of biological role, one of the primary rRNA binding proteins, it binds directly to 16S rRNA where it nucleates assembly of the body of the 30S subunit. With S5 and S12 plays an important role in translational accuracy. In Halorhodospira halophila (strain DSM 244 / SL1) (Ectothiorhodospira halophila (strain DSM 244 / SL1)), this protein is Small ribosomal subunit protein uS4.